The following is a 780-amino-acid chain: Striatin (780 aa).

A coiled-coil region spans residues 53–120; sequence LHFLQHEWAR…QERAKYHKLK (68 aa). A caveolin-binding region spans residues 55-63; sequence FLQHEWARF. Positions 124 to 150 are disordered; it reads ELNQGDMKPPSYDSDEGNETEVQPQQN. Phosphoserine is present on serine 137. Positions 149–166 are calmodulin-binding; it reads QNSQLMWKQGRQLLRQYL. At threonine 225 the chain carries Phosphothreonine. Phosphoserine is present on residues serine 227, serine 229, serine 245, and serine 259. Disordered stretches follow at residues 289–310 and 365–387; these read DFLV…GTDW and DELP…RLPE. The segment covering 299–310 has biased composition (basic and acidic residues); sequence NESRSAGDGTDW. WD repeat units follow at residues 461 to 500, 514 to 553, 567 to 606, 662 to 701, 704 to 743, and 750 to 780; these read SHFD…PAKK, AHKG…IDPY, GHTD…PALS, NSSC…LIHS, AHLE…CIQE, and KFEE…KVFV.

It belongs to the WD repeat striatin family. Part of the core of STRIPAK complexes composed of PP2A catalytic and scaffolding subunits, the striatins (PP2A regulatory subunits), the striatin-associated proteins MOB4, STRIP1 and STRIP2, PDCD10 and members of the STE20 kinases, such as STK24 and STK26. Interacts with CTTNBP2; this interaction may regulate dendritic spine distribution of STRN. Activation of glutamate receptors weakens the interaction with CTTNBP2. As to expression, preferentially expressed in brain.

Its subcellular location is the cytoplasm. The protein resides in the membrane. It localises to the cell projection. It is found in the dendritic spine. Functionally, calmodulin-binding scaffolding protein which is the center of the striatin-interacting phosphatase and kinase (STRIPAK) complexes. STRIPAK complexes have critical roles in protein (de)phosphorylation and are regulators of multiple signaling pathways including Hippo, MAPK, nuclear receptor and cytoskeleton remodeling. Different types of STRIPAK complexes are involved in a variety of biological processes such as cell growth, differentiation, apoptosis, metabolism and immune regulation. The protein is Striatin (STRN) of Homo sapiens (Human).